Consider the following 1046-residue polypeptide: FERM, ARHGEF and pleckstrin domain-containing protein 1 (1046 aa).

One can recognise an FERM domain in the interval 40-320 (ISIKIQMLDD…EHHAFFRLFE (281 aa)). The interval 374–522 (LTAQPSEQHA…LISPLLNDPS (149 aa)) is disordered. Basic and acidic residues predominate over residues 413–424 (KELKASTEDTGQ). The span at 458-513 (RMQQNRPQSQQPSTAGSLTGSPHLSELSINSQGGPSVANMSLSPNLSPDAKQSSPL) shows a compositional bias: polar residues. Residues 541-732 (KAYFIAKEVA…TEMMAQLHGN (192 aa)) enclose the DH domain. Residues 761–858 (EFIRLGSLSK…WIEDIQMAID (98 aa)) enclose the PH 1 domain. Residues 864-907 (SDPVPELLASSPPDNKSPDETTVDQESEDDLSASRTSLERQSPH) form a disordered region. Positions 884–894 (TTVDQESEDDL) are enriched in acidic residues. Residues 933-1030 (ENQLSGNLLR…WMEVIRSATS (98 aa)) form the PH 2 domain.

Interacts with PLXNA4. As to expression, detected in lateral motor column motor neurons and in preganglionic autonomic motor neurons of the column of Terni in the embryonic spinal cord (at protein level).

It localises to the cell membrane. The protein resides in the synapse. Its subcellular location is the synaptosome. The protein localises to the cytoplasm. It is found in the cytosol. It localises to the cell projection. The protein resides in the filopodium. Its subcellular location is the dendrite. The protein localises to the dendritic spine. Functionally, functions as a guanine nucleotide exchange factor for RAC1. Plays a role in semaphorin signaling via its interaction with PLXNA4. Plays a role in the assembly and disassembly of dendritic filopodia, the formation of dendritic spines, regulation of dendrite length and ultimately the formation of synapses. In Gallus gallus (Chicken), this protein is FERM, ARHGEF and pleckstrin domain-containing protein 1 (FARP1).